Here is a 127-residue protein sequence, read N- to C-terminus: Cytochrome b-c1 complex subunit 7, mitochondrial (127 aa).

It belongs to the UQCRB/QCR7 family. As to quaternary structure, component of the ubiquinol-cytochrome c oxidoreductase (cytochrome b-c1 complex, complex III, CIII), a multisubunit enzyme composed of 10 subunits. The complex is composed of 3 respiratory subunits cytochrome b (COB), cytochrome c1 (CYT1) and Rieske protein (RIP1), 2 core protein subunits COR1 and QCR2, and 5 low-molecular weight protein subunits QCR6, QCR7, QCR8, QCR9 and QCR10. The complex exists as an obligatory dimer and forms supercomplexes (SCs) in the inner mitochondrial membrane with a monomer or a dimer of cytochrome c oxidase (complex IV, CIV), resulting in 2 different assemblies (supercomplexes III(2)IV and III(2)IV(2)).

It localises to the mitochondrion inner membrane. In terms of biological role, component of the ubiquinol-cytochrome c oxidoreductase, a multisubunit transmembrane complex that is part of the mitochondrial electron transport chain which drives oxidative phosphorylation. Plays an important role in the uptake of multiple carbon sources such acetate, lactate, amino acids or GlcNAc present in different host niches. This Candida albicans (strain SC5314 / ATCC MYA-2876) (Yeast) protein is Cytochrome b-c1 complex subunit 7, mitochondrial.